A 147-amino-acid chain; its full sequence is Ribosome-binding factor A (147 aa).

The disordered stretch occupies residues Leu-126–Asp-147. Basic and acidic residues predominate over residues His-137–Asp-147.

This sequence belongs to the RbfA family. Monomer. Binds 30S ribosomal subunits, but not 50S ribosomal subunits or 70S ribosomes.

The protein localises to the cytoplasm. In terms of biological role, one of several proteins that assist in the late maturation steps of the functional core of the 30S ribosomal subunit. Associates with free 30S ribosomal subunits (but not with 30S subunits that are part of 70S ribosomes or polysomes). Required for efficient processing of 16S rRNA. May interact with the 5'-terminal helix region of 16S rRNA. In Corynebacterium diphtheriae (strain ATCC 700971 / NCTC 13129 / Biotype gravis), this protein is Ribosome-binding factor A.